A 203-amino-acid polypeptide reads, in one-letter code: ATP-dependent Clp protease proteolytic subunit (203 aa).

The active-site Nucleophile is Ser100. His125 is an active-site residue.

Belongs to the peptidase S14 family. As to quaternary structure, component of the chloroplastic Clp protease core complex.

The protein localises to the plastid. The protein resides in the chloroplast stroma. It carries out the reaction Hydrolysis of proteins to small peptides in the presence of ATP and magnesium. alpha-casein is the usual test substrate. In the absence of ATP, only oligopeptides shorter than five residues are hydrolyzed (such as succinyl-Leu-Tyr-|-NHMec, and Leu-Tyr-Leu-|-Tyr-Trp, in which cleavage of the -Tyr-|-Leu- and -Tyr-|-Trp bonds also occurs).. In terms of biological role, cleaves peptides in various proteins in a process that requires ATP hydrolysis. Has a chymotrypsin-like activity. Plays a major role in the degradation of misfolded proteins. The polypeptide is ATP-dependent Clp protease proteolytic subunit (Dioscorea elephantipes (Elephant's foot yam)).